The sequence spans 211 residues: Abscisic acid receptor PYL7 (211 aa).

An START-like region spans residues 29-180 (HHCRENQCTS…NLKSLACVSE (152 aa)). 2 disulfide bridges follow: Cys-31/Cys-161 and Cys-36/Cys-161. Abscisate-binding positions include Lys-65, 93-98 (ATTSTE), 120-126 (RLKNYSS), and Glu-145. Residues 89–93 (SGLPA) carry the Gate loop motif. The Latch loop motif lies at 119–121 (HRL).

It belongs to the PYR/PYL/RCAR abscisic acid intracellular receptor family. As to quaternary structure, homodimer. Binds ABA on one subunit only. Binds to CARs protein in an ABA-independent manner, both at the plasma membrane and in the nucleus. Interacts with ABI1, and possibly with other PP2Cs.

It is found in the cytoplasm. The protein resides in the nucleus. The protein localises to the cell membrane. Receptor for abscisic acid (ABA) required for ABA-mediated responses such as stomatal closure and germination inhibition. Inhibits the activity of group-A protein phosphatases type 2C (PP2Cs) when activated by ABA. In Arabidopsis thaliana (Mouse-ear cress), this protein is Abscisic acid receptor PYL7 (PYL7).